The following is a 205-amino-acid chain: MSHKKQDAFQGLIDALKVLPNVGPKSAQRIAYHLLQHKRKEAEKLVDALQTALKQVHHCAMCNTFCEGGLCDICADETRDGRRLMVVHMPADVSNMEAANCHDGLYFVLMGQINTALGMDVSAIALDRLAQRLGGGEVEEIIIATAFTAEGNATAYVLSEFFKNLPYKVSRLSQGIPLGGELEYVDAGTLAQAVYERRLIKEGGA.

A C4-type zinc finger spans residues 59–74 (CAMCNTFCEGGLCDIC). A Toprim domain is found at 82–177 (RRLMVVHMPA…KVSRLSQGIP (96 aa)).

It belongs to the RecR family.

Its function is as follows. May play a role in DNA repair. It seems to be involved in an RecBC-independent recombinational process of DNA repair. It may act with RecF and RecO. The polypeptide is Recombination protein RecR (Neisseria meningitidis serogroup C (strain 053442)).